The sequence spans 337 residues: MGAAGSSALARFVLLAQSRPGWLGVAALGLTAVALGAVAWRRAWPTRRRRLLQQVGTVAQLWIYPVKSCKGVPVSEAECTAMGLRSGNLRDRFWLVINQEGNMVTARQEPRLVLISLTCDGDTLTLSAAYTKDLLLPIKTPTTNAVHKCRVHGLEIEGRDCGEATAQWITSFLKSQPYRLVHFEPHMRPRRPHQIADLFRPKDQIAYSDTSPFLILSEASLADLNSRLEKKVKATNFRPNIVISGCDVYAEDSWDELLIGDVELKRVMACSRCILTTVDPDTGVMSRKEPLETLKSYRQCDPSERKLYGKSPLFGQYFVLENPGTIKVGDPVYLLGQ.

Glycine 2 carries N-myristoyl glycine lipidation. At 2–20 (GAAGSSALARFVLLAQSRP) the chain is on the mitochondrial matrix side. Residues 21–40 (GWLGVAALGLTAVALGAVAW) traverse the membrane as a helical; Signal-anchor for type II membrane protein segment. The Cytoplasmic portion of the chain corresponds to 41 to 337 (RRAWPTRRRR…VGDPVYLLGQ (297 aa)). Mo-molybdopterin contacts are provided by lysine 67, serine 68, and arginine 92. The interval 93-183 (FWLVINQEGN…KSQPYRLVHF (91 aa)) is MOSC N-terminal region. Residues 187–335 (MRPRRPHQIA…IKVGDPVYLL (149 aa)) enclose the MOSC domain. The Mo-molybdopterin site is built by threonine 210, serine 211, arginine 238, asparagine 240, serine 271, arginine 272, cysteine 273, and tyrosine 317.

In terms of assembly, component of a complex composed of cytochrome b5, NADH-cytochrome b5 reductase and MTARC1. Mo-molybdopterin is required as a cofactor.

It localises to the mitochondrion outer membrane. The protein localises to the membrane. The catalysed reaction is N(omega)-hydroxy-L-arginine + 2 Fe(II)-[cytochrome b5] + 2 H(+) = L-arginine + 2 Fe(III)-[cytochrome b5] + H2O. Catalyzes the reduction of N-oxygenated molecules, acting as a counterpart of cytochrome P450 and flavin-containing monooxygenases in metabolic cycles. As a component of prodrug-converting system, reduces a multitude of N-hydroxylated prodrugs particularly amidoximes, leading to increased drug bioavailability. May be involved in mitochondrial N(omega)-hydroxy-L-arginine (NOHA) reduction, regulating endogenous nitric oxide levels and biosynthesis. Postulated to cleave the N-OH bond of N-hydroxylated substrates in concert with electron transfer from NADH to cytochrome b5 reductase then to cytochrome b5, the ultimate electron donor that primes the active site for substrate reduction. In Homo sapiens (Human), this protein is Mitochondrial amidoxime-reducing component 1.